The following is a 491-amino-acid chain: Aspartyl/glutamyl-tRNA(Asn/Gln) amidotransferase subunit B (491 aa).

The protein belongs to the GatB/GatE family. GatB subfamily. In terms of assembly, heterotrimer of A, B and C subunits.

It carries out the reaction L-glutamyl-tRNA(Gln) + L-glutamine + ATP + H2O = L-glutaminyl-tRNA(Gln) + L-glutamate + ADP + phosphate + H(+). It catalyses the reaction L-aspartyl-tRNA(Asn) + L-glutamine + ATP + H2O = L-asparaginyl-tRNA(Asn) + L-glutamate + ADP + phosphate + 2 H(+). Functionally, allows the formation of correctly charged Asn-tRNA(Asn) or Gln-tRNA(Gln) through the transamidation of misacylated Asp-tRNA(Asn) or Glu-tRNA(Gln) in organisms which lack either or both of asparaginyl-tRNA or glutaminyl-tRNA synthetases. The reaction takes place in the presence of glutamine and ATP through an activated phospho-Asp-tRNA(Asn) or phospho-Glu-tRNA(Gln). The protein is Aspartyl/glutamyl-tRNA(Asn/Gln) amidotransferase subunit B of Burkholderia ambifaria (strain ATCC BAA-244 / DSM 16087 / CCUG 44356 / LMG 19182 / AMMD) (Burkholderia cepacia (strain AMMD)).